The sequence spans 161 residues: Phosphopantetheine adenylyltransferase (161 aa).

Residue Thr10 participates in substrate binding. ATP contacts are provided by residues 10 to 11 (TF) and His18. Substrate is bound by residues Lys42, Leu74, and Arg88. ATP contacts are provided by residues 89–91 (GLR), Glu99, and 124–130 (NAFISSS).

It belongs to the bacterial CoaD family. In terms of assembly, homohexamer. Mg(2+) serves as cofactor.

It localises to the cytoplasm. It carries out the reaction (R)-4'-phosphopantetheine + ATP + H(+) = 3'-dephospho-CoA + diphosphate. Its pathway is cofactor biosynthesis; coenzyme A biosynthesis; CoA from (R)-pantothenate: step 4/5. Reversibly transfers an adenylyl group from ATP to 4'-phosphopantetheine, yielding dephospho-CoA (dPCoA) and pyrophosphate. This Wolinella succinogenes (strain ATCC 29543 / DSM 1740 / CCUG 13145 / JCM 31913 / LMG 7466 / NCTC 11488 / FDC 602W) (Vibrio succinogenes) protein is Phosphopantetheine adenylyltransferase.